The chain runs to 312 residues: Ribosomal protein L11 methyltransferase (312 aa).

S-adenosyl-L-methionine is bound by residues Thr-162, Gly-183, Asp-205, and Asn-248.

It belongs to the methyltransferase superfamily. PrmA family.

It localises to the cytoplasm. The catalysed reaction is L-lysyl-[protein] + 3 S-adenosyl-L-methionine = N(6),N(6),N(6)-trimethyl-L-lysyl-[protein] + 3 S-adenosyl-L-homocysteine + 3 H(+). Its function is as follows. Methylates ribosomal protein L11. The chain is Ribosomal protein L11 methyltransferase from Bacillus cereus (strain ATCC 10987 / NRS 248).